The primary structure comprises 95 residues: Opiscorpine-1 (95 aa).

Positions 1–19 (MNNKLTALIFLGLLAIASC) are cleaved as a signal peptide. Residues 55–95 (EFMCVANVDMTKSCDTHCQKASGEKGYCHGTKCKCGVPLSY) form the BetaSPN-type CS-alpha/beta domain. Intrachain disulfides connect Cys58–Cys82, Cys68–Cys87, and Cys72–Cys89.

Belongs to the long chain scorpion toxin family. Class 3 subfamily. Expressed by the venom gland.

The protein localises to the secreted. Functionally, the short synthetic peptide (20-54) has antimicrobial activity against the yeasts F.culmorum (IC(50)=8.8 uM) and F.oxysporum (IC(50)=10 uM), and the Gram-negative bacteria E.coli. The polypeptide is Opiscorpine-1 (Opistophthalmus carinatus (African yellow leg scorpion)).